Here is a 943-residue protein sequence, read N- to C-terminus: Nuclear receptor coactivator 7 (943 aa).

Residue methionine 1 is modified to N-acetylmethionine. The span at 1-15 (MDTKEEKKEQKERKQ) shows a compositional bias: basic and acidic residues. The stretch at 1–32 (MDTKEEKKEQKERKQSYFARLKKKKQAKQNAE) forms a coiled coil. A disordered region spans residues 1 to 83 (MDTKEEKKEQ…RKSNQLKEIR (83 aa)). Phosphoserine is present on serine 92. A LysM domain is found at 117 to 160 (MEYTAGSQDTLNSVALKFNVTPNKLVELNKLFTHTIVPGQVLFV). Phosphothreonine is present on threonine 137. The disordered stretch occupies residues 169–189 (TIQLSSSTPGATVSPSSSDAE). A compositionally biased stretch (polar residues) spans 177–187 (PGATVSPSSSD). Phosphoserine is present on residues serine 182, serine 186, serine 211, serine 212, and serine 214. The disordered stretch occupies residues 334–369 (EKRQQNGERTLALDAKSVRSPEESTERTCTRIEPPD). Residues 349–369 (KSVRSPEESTERTCTRIEPPD) are compositionally biased toward basic and acidic residues. Phosphoserine occurs at positions 442, 498, and 500. A compositionally biased stretch (basic and acidic residues) spans 486–499 (EKQDEAPEVDKHSG). Disordered regions lie at residues 486-507 (EKQDEAPEVDKHSGSPENLGES) and 543-576 (LSDRKSIEPGGIDITLSSSLPQAGDSPPEDNKEP). A TLDc domain is found at 782 to 943 (ALLENMHIEQ…VQDLEVWTFE (162 aa)).

Belongs to the OXR1 family. Interacts with ESR1, ESR2A, ESR2B, THRB, PPARG and RARA in a ligand-inducible manner. Interacts with the heterodimer AHR-ARNT. In terms of tissue distribution, highly expressed in brain and kidney. Weakly expressed in mammary gland, lung and testis. In brain, expression is found in neurons of cerebral cortex, thalamus, hypothalamus, hippocampus, cerebellum, striatum and choroid plexus.

It is found in the nucleus. Its function is as follows. Enhances the transcriptional activities of several nuclear receptors. Involved in the coactivation of different nuclear receptors, such as ESR1, THRB, PPARG and RARA. The polypeptide is Nuclear receptor coactivator 7 (Ncoa7) (Mus musculus (Mouse)).